A 258-amino-acid chain; its full sequence is Global transcriptional regulator CodY (258 aa).

Positions 1–156 (MSTLLDKTRK…SATIVGLEIL (156 aa)) are GAF domain. The segment at residues 204–223 (ASKIADKVGITRSVIVNALR) is a DNA-binding region (H-T-H motif).

This sequence belongs to the CodY family.

It is found in the cytoplasm. DNA-binding global transcriptional regulator which is involved in the adaptive response to starvation and acts by directly or indirectly controlling the expression of numerous genes in response to nutrient availability. During rapid exponential growth, CodY is highly active and represses genes whose products allow adaptation to nutrient depletion. This chain is Global transcriptional regulator CodY, found in Clostridium kluyveri (strain NBRC 12016).